Reading from the N-terminus, the 57-residue chain is Large ribosomal subunit protein bL32B (57 aa).

It belongs to the bacterial ribosomal protein bL32 family.

The protein is Large ribosomal subunit protein bL32B of Listeria welshimeri serovar 6b (strain ATCC 35897 / DSM 20650 / CCUG 15529 / CIP 8149 / NCTC 11857 / SLCC 5334 / V8).